The following is a 181-amino-acid chain: ADP-ribosylation factor 1 (181 aa).

Gly-2 carries N-myristoyl glycine lipidation. The tract at residues 3–16 (NMFANLFKGLFGKK) is important for the stable binding to the membranes. GTP-binding positions include 24–32 (GLDAAGKTT), 126–129 (NKQD), and Ala-160.

It belongs to the small GTPase superfamily. Arf family.

It is found in the golgi apparatus membrane. The catalysed reaction is GTP + H2O = GDP + phosphate + H(+). Alternates between an inactive GDP-bound form and an active GTP-bound form. Activated by a guanine nucleotide-exchange factor (GEF) and inactivated by GTPase-activating protein (GAP). Small GTPase involved in protein trafficking between different compartments. Modulates vesicle budding and uncoating within the Golgi complex. In its GTP-bound form, triggers the recruitment of coatomer proteins to the Golgi membrane. The hydrolysis of ARF1-bound GTP, which is mediated by ARFGAPs proteins, is required for dissociation of coat proteins from Golgi membranes and vesicles. The polypeptide is ADP-ribosylation factor 1 (arf1) (Xenopus laevis (African clawed frog)).